The primary structure comprises 310 residues: Lipoyl synthase (310 aa).

[4Fe-4S] cluster is bound by residues Cys41, Cys46, Cys52, Cys68, Cys72, Cys75, and Ser281. Residues 54–270 enclose the Radical SAM core domain; the sequence is GERRTATFMI…RKVAMEKGFK (217 aa). A disordered region spans residues 285-310; that stretch reads DEQVNEAAKERQRIGDEKLEAAKNEA.

It belongs to the radical SAM superfamily. Lipoyl synthase family. The cofactor is [4Fe-4S] cluster.

Its subcellular location is the cytoplasm. It catalyses the reaction [[Fe-S] cluster scaffold protein carrying a second [4Fe-4S](2+) cluster] + N(6)-octanoyl-L-lysyl-[protein] + 2 oxidized [2Fe-2S]-[ferredoxin] + 2 S-adenosyl-L-methionine + 4 H(+) = [[Fe-S] cluster scaffold protein] + N(6)-[(R)-dihydrolipoyl]-L-lysyl-[protein] + 4 Fe(3+) + 2 hydrogen sulfide + 2 5'-deoxyadenosine + 2 L-methionine + 2 reduced [2Fe-2S]-[ferredoxin]. It functions in the pathway protein modification; protein lipoylation via endogenous pathway; protein N(6)-(lipoyl)lysine from octanoyl-[acyl-carrier-protein]. In terms of biological role, catalyzes the radical-mediated insertion of two sulfur atoms into the C-6 and C-8 positions of the octanoyl moiety bound to the lipoyl domains of lipoate-dependent enzymes, thereby converting the octanoylated domains into lipoylated derivatives. The protein is Lipoyl synthase of Staphylococcus carnosus (strain TM300).